Reading from the N-terminus, the 275-residue chain is tRNA-splicing endonuclease subunit SEN34 (275 aa).

Catalysis depends on residues Y209, H217, and K250.

The protein belongs to the tRNA-intron endonuclease family. Heterotetramer composed of SEN2, SEN15, SEN34 and SEN54. Interacts directly with SEN15.

It is found in the nucleus. The protein resides in the endomembrane system. The protein localises to the mitochondrion outer membrane. It catalyses the reaction pretRNA = a 3'-half-tRNA molecule with a 5'-OH end + a 5'-half-tRNA molecule with a 2',3'-cyclic phosphate end + an intron with a 2',3'-cyclic phosphate and a 5'-hydroxyl terminus.. Constitutes one of the two catalytic subunit of the tRNA-splicing endonuclease complex, a complex responsible for identification and cleavage of the splice sites in pre-tRNA. It cleaves pre-tRNA at the 5'- and 3'-splice sites to release the intron. The products are an intron and two tRNA half-molecules bearing 2',3'-cyclic phosphate and 5'-OH termini. There are no conserved sequences at the splice sites, but the intron is invariably located at the same site in the gene, placing the splice sites an invariant distance from the constant structural features of the tRNA body. It probably carries the active site for 3'-splice site cleavage. The polypeptide is tRNA-splicing endonuclease subunit SEN34 (SEN34) (Saccharomyces cerevisiae (strain ATCC 204508 / S288c) (Baker's yeast)).